Reading from the N-terminus, the 304-residue chain is MAVQAHHMNIFSQFISPNRDCVKFQENMNHGEFEFTGGEVPLITGESFAVEPLAAKANFNKAESGLSYNFTVPPLSTKRQRDFQFSDSNAPVKRRSVAFDSSSPSLINVELVSQIQNQQQSEIDRFVAQQTEKLRIEIEARQQTQTRMLASAVQNVIAKKLKEKDDEIVRIRNLNWVLQERVKSLYVENQIWRDIAQTNEANANTLRTNLDQVLAQLETFPTASAVVEDDAESSCGSCCGDGGGEAVTAVGGGCKRCGEREASVLVLPCRHLCLCTVCGGSALLRTCPVCDMVMNASVHVNMSS.

The tract at residues Leu178 to Leu214 is WRD domain. Residues Gln197 to Phe220 adopt a coiled-coil conformation. The RING-type zinc finger occupies Cys254–Asp291.

As to quaternary structure, interacts with MYB108/BOS1 and the DELLA proteins GAI, RGA, RGL1, RGL2 and RGL3. In terms of tissue distribution, expressed in leaves, siliques, roots, flowering tissues and stigma tips.

It is found in the nucleus. It carries out the reaction S-ubiquitinyl-[E2 ubiquitin-conjugating enzyme]-L-cysteine + [acceptor protein]-L-lysine = [E2 ubiquitin-conjugating enzyme]-L-cysteine + N(6)-ubiquitinyl-[acceptor protein]-L-lysine.. The protein operates within protein degradation; proteasomal ubiquitin-dependent pathway. In terms of biological role, E3 ubiquitin-protein ligase involved in the regulation of pathogen and abiotic stress responses by facilitating degradation of MYB108/BOI. Attenuates cell death by preventing caspase activation. Has no effect on the stability of the DELLA proteins. Not regulated by MYB108/BOI. This chain is E3 ubiquitin-protein ligase BOI (BOI), found in Arabidopsis thaliana (Mouse-ear cress).